Consider the following 158-residue polypeptide: Anaerobic nitrite reductase AHB2 (158 aa).

Residues 5–154 (GFTEKQEALV…LALAIKTEMK (150 aa)) enclose the Globin domain. Positions 38–42 (EIAPA) match the Homodimerization motif. Heme b-binding residues include Ser48, Lys62, His66, and His101. Residues 108 to 120 (DPHFEVVKEALLR) carry the Homodimerization motif.

Belongs to the plant globin family. In terms of assembly, unable to dimerize. It depends on heme b as a cofactor. In terms of tissue distribution, expressed in rosette leaves but not in roots.

Its subcellular location is the cytoplasm. The protein localises to the nucleus. It catalyses the reaction Fe(III)-heme b-[protein] + nitric oxide + H2O = Fe(II)-heme b-[protein] + nitrite + 2 H(+). Its function is as follows. Phytoglobin that reduces nitrite to nitric oxide (NO) under anoxic conditions (e.g. during flooding or in waterlogged soil). May not function as an oxygen storage or transport protein. Has an unusually high affinity for O(2) through an hexacoordinate heme iron because of a very low dissociation constant. The chain is Anaerobic nitrite reductase AHB2 from Arabidopsis thaliana (Mouse-ear cress).